The chain runs to 1026 residues: MSTFLRAVRDNIPEKDKSELTENDLKKWGLGAIHLRPYQLDGVKWLSLCMKNQQGCILGDEMGLGKTCQTISLLAYARGSLKMNGPFLVLCPLAVLENWRQELERFCPSLSVICYTGDKEKRAELQQNLKSDPRFHVLLTTYEMCLKDARYLKSWKWKILVVDEAHRLKNQESLLHQTLKEFTVGFRVLLTGTPIQNNLQEVYSLLTFIQPSVFLPEAVEDFVNAYADIQTEPALVDELHQVLQPFLLRRVKAEVAAELPKKTELVVFHGLSALQKRYYKAILMRDLDAFRTDQSTKTRLLNVLMQLRKCVDHPYLFDGVEPEPFEMGEHLVEASGKLSLLDSMLAYLQEGGHHVLLFSQMTRMLDILQDYLEYRGYSYERLDGSVRGEERNLAIKNFSTKDVFIFLLSTKAGGVGMNLTAADTVIFVDGDFNPQNDLQAAARAHRIGQTRPVKVIRLLGRDTIEEIIYSRAVSKLRLTDTVIEEGRFSLLDQAQSAASGLQLSEILKFGVDKLLSSEESSVQDVDLQLILGQSRDGQWLTDEEHAKLNESNEEEDEDMEGQNHMYYFEGKDYSKDPSAEDEKTFELLLEKQFAEMEDAEKEGRALRNKAGVSLSGPLINPARKKRPLTEAELEERRQKRQAAAAKRAKLQEERKKQQEELNYKKKMAWWDSCGYRSLCLPRVDSEGEDMEPDEDDHVSFSSTDSDHTAIRYVLGDVTHPQADREDAIIVHCVDDSGHWGRGGLFTALGLRSDEPRKQYELAGDMKDLELGNVLLFPVDDKQSRLCGRDYLALIVAQQRDKANKLSGIRLTALDEGLKKIYKAAKQKKASVHLPRIGHSTKGFNWYGTERLIRKHLATRGIFTSIYYYRRGSSHATVSSTASTTTPSSSKPAASSPSESPHSSSPPANREGLTKSAELSTTSHEGPGAPGLADFMRGVHVYFYNMAATEKKKLTRYLITYDGDEEDLMSSHVTHIVGEVESPVHKQELQDLLHQYPQALLVKKNWLESCFASQRKVSVSKYVIRLT.

The Helicase ATP-binding domain occupies 47-212 (SLCMKNQQGC…YSLLTFIQPS (166 aa)). 60–67 (DEMGLGKT) contributes to the ATP binding site. The short motif at 163–166 (DEAH) is the DEAH box element. Residues 340–494 (LLDSMLAYLQ…EGRFSLLDQA (155 aa)) enclose the Helicase C-terminal domain. The stretch at 540–668 (LTDEEHAKLN…EELNYKKKMA (129 aa)) forms a coiled coil. The regulatory linker segment (RLS) stretch occupies residues 594-628 (AEMEDAEKEGRALRNKAGVSLSGPLINPARKKRPL). Residues 606 to 655 (LRNKAGVSLSGPLINPARKKRPLTEAELEERRQKRQAAAAKRAKLQEERK) form a disordered region. The interval 608–666 (NKAGVSLSGPLINPARKKRPLTEAELEERRQKRQAAAAKRAKLQEERKKQQEELNYKKK) is required for ATPase activity. One can recognise a Macro domain in the interval 697-870 (HVSFSSTDSD…IFTSIYYYRR (174 aa)). Low complexity predominate over residues 877–907 (VSSTASTTTPSSSKPAASSPSESPHSSSPPA). Residues 877–929 (VSSTASTTTPSSSKPAASSPSESPHSSSPPANREGLTKSAELSTTSHEGPGAP) form a disordered region. Residues 930 to 1023 (GLADFMRGVH…RKVSVSKYVI (94 aa)) form the BRCT domain.

The protein belongs to the SNF2/RAD54 helicase family. Interacts with nucleosomes; interacts with the acidic patch of histones.

The protein localises to the nucleus. Its subcellular location is the chromosome. The enzyme catalyses ATP + H2O = ADP + phosphate + H(+). With respect to regulation, adopts an inactive conformation in absence of DNA damage. Binding to poly-ADP-ribosylated histones activates the ATP-dependent chromatin remodeler activity. ATP-dependent chromatin remodeler that mediates chromatin-remodeling following DNA damage. Recruited to DNA damage sites through interaction with poly-ADP-ribose: specifically recognizes and binds histones that are poly-ADP-ribosylated on serine residues in response to DNA damage. Poly-ADP-ribose-binding activates the ATP-dependent chromatin remodeler activity, thereby regulating chromatin during DNA repair. Catalyzes nucleosome sliding away from DNA breaks in an ATP-dependent manner. The chain is Chromodomain-helicase-DNA-binding protein 1-like (chd1l) from Danio rerio (Zebrafish).